Here is a 1305-residue protein sequence, read N- to C-terminus: ABC transporter FPSE_09185 (1305 aa).

An N-linked (GlcNAc...) asparagine glycan is attached at N28. 6 consecutive transmembrane segments (helical) span residues 44–64, 99–119, 172–192, 199–219, 277–297, and 312–332; these read FCVY…MPLM, LYIV…KFCF, RLGT…VAFT, IVSA…VPIY, IIGA…GLAF, and VGVV…FSYL. Residues 48–348 enclose the ABC transmembrane type-1 1 domain; sequence VVGALASIGV…ISQAMVAATE (301 aa). The 292-residue stretch at 372–663 folds into the ABC transporter 1 domain; sequence LIFKDVTFEY…ENGVYYSLVE (292 aa). Residue 407 to 414 coordinates ATP; that stretch reads GPSGSGKS. Positions 434–454 are disordered; it reads EAATPRSSKEGERDNHDERKY. Residues 440 to 454 are compositionally biased toward basic and acidic residues; it reads SSKEGERDNHDERKY. N-linked (GlcNAc...) asparagine glycans are attached at residues N468, N507, and N525. The next 6 helical transmembrane spans lie at 737 to 757, 780 to 800, 851 to 873, 877 to 899, 964 to 984, and 999 to 1019; these read FLLI…QAWL, GFMW…QCWI, GVFG…CLII, FGWK…SGFW, AVIF…ILWY, and FMVS…ILGV. The 288-residue stretch at 738 to 1025 folds into the ABC transmembrane type-1 2 domain; it reads LLITIASMGV…ILGVAPSAAQ (288 aa). The interval 1038–1057 is disordered; that stretch reads DSNRSSQEAEKSGPTVEDTD. N1040, N1066, and N1075 each carry an N-linked (GlcNAc...) asparagine glycan. The region spanning 1062–1300 is the ABC transporter 2 domain; the sequence is IELCNVSFKY…RGIYWDMCQT (239 aa). ATP is bound at residue 1096–1103; that stretch reads GPSGCGKT. A glycan (N-linked (GlcNAc...) asparagine) is linked at N1125.

This sequence belongs to the ABC transporter superfamily. ABCB family. Multidrug resistance exporter (TC 3.A.1.201) subfamily.

It localises to the membrane. Its function is as follows. ABC transporter; part of the gene cluster that mediates the biosynthesis of the lipopeptides W493 A and B. W493 A and B consist of six amino acid residues D-allo-thr, L-Ala, D-Ala, L-Gln, D-Tyr, and L-Val/L-Ile linked to a 3-hydroxy-4-methyltetradecanoic acid polyketide chain. May be involved in excretion or internal transport of W493 A and B. This Fusarium pseudograminearum (strain CS3096) (Wheat and barley crown-rot fungus) protein is ABC transporter FPSE_09185.